The chain runs to 199 residues: V-type ATP synthase subunit E (199 aa).

Belongs to the V-ATPase E subunit family.

Its function is as follows. Produces ATP from ADP in the presence of a proton gradient across the membrane. In Borreliella afzelii (strain PKo) (Borrelia afzelii), this protein is V-type ATP synthase subunit E.